A 497-amino-acid polypeptide reads, in one-letter code: Putative BTB/POZ domain-containing protein R738 (497 aa).

The region spanning serine 16–alanine 86 is the BTB domain.

This sequence belongs to the mimivirus BTB/WD family.

The polypeptide is Putative BTB/POZ domain-containing protein R738 (Acanthamoeba polyphaga (Amoeba)).